The chain runs to 122 residues: Large ribosomal subunit protein uL14 (122 aa).

This sequence belongs to the universal ribosomal protein uL14 family. In terms of assembly, part of the 50S ribosomal subunit. Forms a cluster with proteins L3 and L19. In the 70S ribosome, L14 and L19 interact and together make contacts with the 16S rRNA in bridges B5 and B8.

Its function is as follows. Binds to 23S rRNA. Forms part of two intersubunit bridges in the 70S ribosome. The polypeptide is Large ribosomal subunit protein uL14 (Acinetobacter baumannii (strain AB307-0294)).